A 131-amino-acid chain; its full sequence is Profilin-3 (131 aa).

Cysteines 13 and 115 form a disulfide. The short motif at 81 to 97 is the Involved in PIP2 interaction element; it reads AVIRGKKGAGGITIKKT. Position 111 is a phosphothreonine (T111).

The protein belongs to the profilin family. In terms of assembly, occurs in many kinds of cells as a complex with monomeric actin in a 1:1 ratio. Phosphorylated by MAP kinases.

It localises to the cytoplasm. The protein localises to the cytoskeleton. Binds to actin and affects the structure of the cytoskeleton. At high concentrations, profilin prevents the polymerization of actin, whereas it enhances it at low concentrations. The sequence is that of Profilin-3 from Olea europaea (Common olive).